Here is a 389-residue protein sequence, read N- to C-terminus: MTSGSKAHPVPATCTMESPPLHLDMGAARSSVCTELTIMPRPLAKSLQDSIDSNFPIDEGFQSGGEDEDMRRLFCNILPEVSTAAVDAPFHYTSSLPSKGVRDKLIGGLNIWVGASPKALDSVTSVVVDVHNLSLMQDDVEDNSPLRRSRPSTHSIFGIDQTVNSSTCGIVEVLRRSSEMQNPAFLKIVIEELRSLLIGQSLDLLWTHQISTPSVEEYLQMVDGKTGGLFRMASKLMIAQSESSNMNPTDLDALMTLLGRYFQIRDDYMNLTSQEYTKSKGFCEDLDEGKYSLIMIHALENCDHKSRVLLDSMLLERRATGAAGLGHKELILSMMQQTGSLQYAVEILSVLFNEIFELVELIDRRTGKVNKPIRDLLAALEIKKDSPRK.

The isopentenyl diphosphate site is built by Lys99, Arg102, and His131. Positions 138 and 142 each coordinate Mg(2+). Residue Arg147 participates in dimethylallyl diphosphate binding. An isopentenyl diphosphate-binding site is contributed by Arg148.

The protein belongs to the FPP/GGPP synthase family. The cofactor is Mg(2+).

The protein resides in the cytoplasm. The catalysed reaction is isopentenyl diphosphate + (2E)-geranyl diphosphate = (2E,6E)-farnesyl diphosphate + diphosphate. It carries out the reaction isopentenyl diphosphate + (2E,6E)-farnesyl diphosphate = (2E,6E,10E)-geranylgeranyl diphosphate + diphosphate. The protein operates within isoprenoid biosynthesis; farnesyl diphosphate biosynthesis; farnesyl diphosphate from geranyl diphosphate and isopentenyl diphosphate: step 1/1. It participates in isoprenoid biosynthesis; geranylgeranyl diphosphate biosynthesis; geranylgeranyl diphosphate from farnesyl diphosphate and isopentenyl diphosphate: step 1/1. In terms of biological role, catalyzes the trans-addition of the 2 molecules of isopentenyl diphosphate (IPP) onto geranyl diphosphate (GDP) to form geranylgeranyl pyrophosphate (GGDP). Does not catalyze the conversion of dimethylallyl diphosphate (DMAPP). In Phomopsis amygdali (Fusicoccum amygdali), this protein is Geranylgeranyl pyrophosphate synthase A (GGS-A).